The sequence spans 150 residues: uncharacterized protein (150 aa).

One can recognise an HTH asnC-type domain in the interval 5–66 (LDRTDKMLLE…KPNYKKLNLG (62 aa)). The segment at residues 24–43 (IAALSKKLGIPRTTVHYRIK) is a DNA-binding region (H-T-H motif).

This is an uncharacterized protein from Pyrococcus furiosus (strain ATCC 43587 / DSM 3638 / JCM 8422 / Vc1).